The sequence spans 711 residues: Putative membrane protein IgaA homolog (711 aa).

A topological domain (periplasmic) is located at residue M1. The chain crosses the membrane as a helical span at residues 2 to 22; the sequence is STIVIFLAALLACSLLAGWLI. At 23–204 the chain is on the cytoplasmic side; sequence KVRSRRRQLP…YALSRPRGLR (182 aa). Helical transmembrane passes span 205-225 and 226-246; these read EALL…TPDV and FVPW…WGLF. Residues 247-339 are Cytoplasmic-facing; that stretch reads APPAKSSLRE…KNFPLQHWLR (93 aa). Residues 340-360 form a helical membrane-spanning segment; that stretch reads STIIAAGSLLVLFMLLFWIPL. Residues 361 to 655 are Periplasmic-facing; sequence DMPLKFTLSW…IPDRSGLWRY (295 aa). Residues 656-676 form a helical membrane-spanning segment; sequence LSTTLLLLTMLGSAIYNGVQA. Residues 677–711 are Cytoplasmic-facing; that stretch reads WRRYQRHRTRMMKIQAYYESCLNPQLITPSESLIE.

The protein belongs to the IgaA family.

The protein resides in the cell inner membrane. This chain is Putative membrane protein IgaA homolog (yrfF), found in Escherichia coli O157:H7.